Here is a 105-residue protein sequence, read N- to C-terminus: ATP-dependent Clp protease adapter protein ClpS (105 aa).

Belongs to the ClpS family. As to quaternary structure, binds to the N-terminal domain of the chaperone ClpA.

In terms of biological role, involved in the modulation of the specificity of the ClpAP-mediated ATP-dependent protein degradation. This chain is ATP-dependent Clp protease adapter protein ClpS, found in Klebsiella pneumoniae (strain 342).